The sequence spans 360 residues: Histidinol-phosphate aminotransferase (360 aa).

Lys219 is subject to N6-(pyridoxal phosphate)lysine.

It belongs to the class-II pyridoxal-phosphate-dependent aminotransferase family. Histidinol-phosphate aminotransferase subfamily. In terms of assembly, homodimer. Pyridoxal 5'-phosphate serves as cofactor.

The enzyme catalyses L-histidinol phosphate + 2-oxoglutarate = 3-(imidazol-4-yl)-2-oxopropyl phosphate + L-glutamate. It participates in amino-acid biosynthesis; L-histidine biosynthesis; L-histidine from 5-phospho-alpha-D-ribose 1-diphosphate: step 7/9. The sequence is that of Histidinol-phosphate aminotransferase from Jannaschia sp. (strain CCS1).